A 385-amino-acid chain; its full sequence is Aspartate/prephenate aminotransferase (385 aa).

G39, W125, and N175 together coordinate L-aspartate. Position 234 is an N6-(pyridoxal phosphate)lysine (K234). R361 lines the L-aspartate pocket.

It belongs to the class-I pyridoxal-phosphate-dependent aminotransferase family. Homodimer. The cofactor is pyridoxal 5'-phosphate.

It is found in the cytoplasm. It carries out the reaction L-aspartate + 2-oxoglutarate = oxaloacetate + L-glutamate. The catalysed reaction is L-arogenate + oxaloacetate = prephenate + L-aspartate. Catalyzes the reversible conversion of aspartate and 2-oxoglutarate to glutamate and oxaloacetate. Can also transaminate prephenate in the presence of aspartate. The polypeptide is Aspartate/prephenate aminotransferase (aspC) (Thermus thermophilus (strain ATCC 27634 / DSM 579 / HB8)).